The following is a 398-amino-acid chain: Serpin-Z2A (398 aa).

Positions 343–367 are RCL; that stretch reads GTEAAAATIAKAVLLSASPPSDMDF.

It belongs to the serpin family.

Inhibits chymotrypsin and cathepsin G in vitro. The chain is Serpin-Z2A from Triticum aestivum (Wheat).